A 352-amino-acid polypeptide reads, in one-letter code: Peptide chain release factor 1 (352 aa).

Position 233 is an N5-methylglutamine (glutamine 233). A disordered region spans residues 288–309 (NAKDRKEQVGSGDRSERIRTYN). Residues 289–306 (AKDRKEQVGSGDRSERIR) show a composition bias toward basic and acidic residues.

Belongs to the prokaryotic/mitochondrial release factor family. Methylated by PrmC. Methylation increases the termination efficiency of RF1.

It is found in the cytoplasm. Peptide chain release factor 1 directs the termination of translation in response to the peptide chain termination codons UAG and UAA. This chain is Peptide chain release factor 1, found in Helicobacter pylori (strain G27).